The sequence spans 111 residues: uncharacterized protein (111 aa).

This is an uncharacterized protein from Microplitis demolitor bracovirus (isolate Webb) (MdBV).